A 66-amino-acid polypeptide reads, in one-letter code: Neurotoxin-like protein STR1 (66 aa).

The LCN-type CS-alpha/beta domain occupies 2–65; it reads RDGYIVHDGT…VWGEDGFMCW (64 aa). 4 disulfide bridges follow: cysteine 13-cysteine 64, cysteine 17-cysteine 40, cysteine 26-cysteine 45, and cysteine 30-cysteine 47.

Belongs to the long (4 C-C) scorpion toxin superfamily. Sodium channel inhibitor family. Beta subfamily. As to expression, expressed by the venom gland.

The protein localises to the secreted. In terms of biological role, this protein is not toxic. This is Neurotoxin-like protein STR1 from Androctonus australis (Sahara scorpion).